Reading from the N-terminus, the 366-residue chain is Chorismate synthase (366 aa).

NADP(+)-binding residues include R48 and R54. FMN is bound by residues 125 to 127, 238 to 239, G278, 293 to 297, and R319; these read RSS, NA, and KPTSS.

The protein belongs to the chorismate synthase family. Homotetramer. Requires FMNH2 as cofactor.

The enzyme catalyses 5-O-(1-carboxyvinyl)-3-phosphoshikimate = chorismate + phosphate. The protein operates within metabolic intermediate biosynthesis; chorismate biosynthesis; chorismate from D-erythrose 4-phosphate and phosphoenolpyruvate: step 7/7. Its function is as follows. Catalyzes the anti-1,4-elimination of the C-3 phosphate and the C-6 proR hydrogen from 5-enolpyruvylshikimate-3-phosphate (EPSP) to yield chorismate, which is the branch point compound that serves as the starting substrate for the three terminal pathways of aromatic amino acid biosynthesis. This reaction introduces a second double bond into the aromatic ring system. This chain is Chorismate synthase, found in Pseudoalteromonas atlantica (strain T6c / ATCC BAA-1087).